A 330-amino-acid polypeptide reads, in one-letter code: DNA-directed RNA polymerase subunit alpha (330 aa).

The interval 1–231 is alpha N-terminal domain (alpha-NTD); sequence MAILAFQKPD…IYHFMLFSDE (231 aa). Residues 253 to 330 are alpha C-terminal domain (alpha-CTD); it reads MRQLLKTKLV…DISKYKLDKE (78 aa).

Belongs to the RNA polymerase alpha chain family. In terms of assembly, homodimer. The RNAP catalytic core consists of 2 alpha, 1 beta, 1 beta' and 1 omega subunit. When a sigma factor is associated with the core the holoenzyme is formed, which can initiate transcription.

It catalyses the reaction RNA(n) + a ribonucleoside 5'-triphosphate = RNA(n+1) + diphosphate. Its function is as follows. DNA-dependent RNA polymerase catalyzes the transcription of DNA into RNA using the four ribonucleoside triphosphates as substrates. The chain is DNA-directed RNA polymerase subunit alpha from Phocaeicola vulgatus (strain ATCC 8482 / DSM 1447 / JCM 5826 / CCUG 4940 / NBRC 14291 / NCTC 11154) (Bacteroides vulgatus).